A 394-amino-acid polypeptide reads, in one-letter code: NAD(P)H-quinone oxidoreductase subunit H (394 aa).

The protein belongs to the complex I 49 kDa subunit family. As to quaternary structure, NDH-1 can be composed of about 15 different subunits; different subcomplexes with different compositions have been identified which probably have different functions.

It is found in the cellular thylakoid membrane. It catalyses the reaction a plastoquinone + NADH + (n+1) H(+)(in) = a plastoquinol + NAD(+) + n H(+)(out). The enzyme catalyses a plastoquinone + NADPH + (n+1) H(+)(in) = a plastoquinol + NADP(+) + n H(+)(out). Its function is as follows. NDH-1 shuttles electrons from an unknown electron donor, via FMN and iron-sulfur (Fe-S) centers, to quinones in the respiratory and/or the photosynthetic chain. The immediate electron acceptor for the enzyme in this species is believed to be plastoquinone. Couples the redox reaction to proton translocation, and thus conserves the redox energy in a proton gradient. Cyanobacterial NDH-1 also plays a role in inorganic carbon-concentration. The chain is NAD(P)H-quinone oxidoreductase subunit H from Picosynechococcus sp. (strain ATCC 27264 / PCC 7002 / PR-6) (Agmenellum quadruplicatum).